The chain runs to 557 residues: Dihydroxy-acid dehydratase (557 aa).

D78 contributes to the Mg(2+) binding site. C119 contacts [2Fe-2S] cluster. The Mg(2+) site is built by D120 and K121. At K121 the chain carries N6-carboxylysine. [2Fe-2S] cluster is bound at residue C192. E442 lines the Mg(2+) pocket. The Proton acceptor role is filled by S468.

It belongs to the IlvD/Edd family. In terms of assembly, homodimer. The cofactor is [2Fe-2S] cluster. Mg(2+) is required as a cofactor.

It catalyses the reaction (2R)-2,3-dihydroxy-3-methylbutanoate = 3-methyl-2-oxobutanoate + H2O. The catalysed reaction is (2R,3R)-2,3-dihydroxy-3-methylpentanoate = (S)-3-methyl-2-oxopentanoate + H2O. The protein operates within amino-acid biosynthesis; L-isoleucine biosynthesis; L-isoleucine from 2-oxobutanoate: step 3/4. It participates in amino-acid biosynthesis; L-valine biosynthesis; L-valine from pyruvate: step 3/4. Its function is as follows. Functions in the biosynthesis of branched-chain amino acids. Catalyzes the dehydration of (2R,3R)-2,3-dihydroxy-3-methylpentanoate (2,3-dihydroxy-3-methylvalerate) into 2-oxo-3-methylpentanoate (2-oxo-3-methylvalerate) and of (2R)-2,3-dihydroxy-3-methylbutanoate (2,3-dihydroxyisovalerate) into 2-oxo-3-methylbutanoate (2-oxoisovalerate), the penultimate precursor to L-isoleucine and L-valine, respectively. This Bacillus cereus (strain Q1) protein is Dihydroxy-acid dehydratase.